The primary structure comprises 404 residues: uncharacterized protein (404 aa).

Cys69, Cys75, Cys78, and Cys166 together coordinate [4Fe-4S] cluster. 4 residues coordinate S-adenosyl-L-methionine: Gln226, Tyr253, Glu274, and Asp334. Cys361 serves as the catalytic Nucleophile.

It belongs to the class I-like SAM-binding methyltransferase superfamily. RNA M5U methyltransferase family.

This is an uncharacterized protein from Treponema denticola (strain ATCC 35405 / DSM 14222 / CIP 103919 / JCM 8153 / KCTC 15104).